We begin with the raw amino-acid sequence, 264 residues long: Phosphonoacetaldehyde hydrolase (264 aa).

The Nucleophile role is filled by D9. D9 and A11 together coordinate Mg(2+). The active-site Schiff-base intermediate with substrate is K50. A Mg(2+)-binding site is contributed by D183.

Belongs to the HAD-like hydrolase superfamily. PhnX family. In terms of assembly, homodimer. The cofactor is Mg(2+).

It carries out the reaction phosphonoacetaldehyde + H2O = acetaldehyde + phosphate + H(+). Its function is as follows. Involved in phosphonate degradation. In Bacillus cytotoxicus (strain DSM 22905 / CIP 110041 / 391-98 / NVH 391-98), this protein is Phosphonoacetaldehyde hydrolase.